We begin with the raw amino-acid sequence, 261 residues long: Putative [LysW]-aminoadipate/[LysW]-glutamate kinase (261 aa).

Substrate is bound by residues 35-36, Arg62, and Asn162; that span reads GG.

The protein belongs to the acetylglutamate kinase family. LysZ subfamily.

The protein localises to the cytoplasm. It carries out the reaction [amino-group carrier protein]-C-terminal-N-(1,4-dicarboxybutan-1-yl)-L-glutamine + ATP = [amino-group carrier protein]-C-terminal-N-(1-carboxy-5-phosphooxy-5-oxopentan-1-yl)-L-glutamine + ADP. It catalyses the reaction [amino-group carrier protein]-C-terminal-gamma-(L-glutamyl)-L-glutamate + ATP = [amino-group carrier protein]-C-terminal-gamma-(5-phospho-L-glutamyl)-L-glutamate + ADP. It functions in the pathway amino-acid biosynthesis; L-lysine biosynthesis via AAA pathway; L-lysine from L-alpha-aminoadipate (Thermus route): step 2/5. Its pathway is amino-acid biosynthesis; L-arginine biosynthesis. In terms of biological role, involved in both the arginine and lysine biosynthetic pathways. Phosphorylates the LysW-bound precursors glutamate (for arginine biosynthesis), respectively alpha-aminoadipate (for lysine biosynthesis). This is Putative [LysW]-aminoadipate/[LysW]-glutamate kinase from Pyrobaculum islandicum (strain DSM 4184 / JCM 9189 / GEO3).